Consider the following 276-residue polypeptide: 4-deoxy-L-threo-5-hexosulose-uronate ketol-isomerase 1 (276 aa).

4 residues coordinate Zn(2+): His-194, His-196, Glu-201, and His-243.

It belongs to the KduI family. The cofactor is Zn(2+).

It carries out the reaction 5-dehydro-4-deoxy-D-glucuronate = 3-deoxy-D-glycero-2,5-hexodiulosonate. The protein operates within glycan metabolism; pectin degradation; 2-dehydro-3-deoxy-D-gluconate from pectin: step 4/5. Catalyzes the isomerization of 5-dehydro-4-deoxy-D-glucuronate to 3-deoxy-D-glycero-2,5-hexodiulosonate. This is 4-deoxy-L-threo-5-hexosulose-uronate ketol-isomerase 1 (kduI1) from Enterococcus faecalis (strain ATCC 700802 / V583).